Reading from the N-terminus, the 345-residue chain is NADH-ubiquinone oxidoreductase chain 2 (345 aa).

9 helical membrane passes run 25–45 (HWLLAWMGLEINTLAIIPLMT), 60–80 (FLTQAAASALLLFSSLNNAWL), 99–119 (TIAICMKLGLAPFHFWLPEVL), 149–171 (LNTPLLLTLGLTSTLIGGWGGLN), 178–198 (ILAFSSIAHLGWMISILPFSP), 199–219 (QLMILNLTIYLIMTSTMFLVL), 242–262 (ALSLLTLLSLGGLPPLSGFVP), 282–302 (LALSALLSLFFYLRLTYIVTL), and 324–344 (LLLSIALILSSFIIPISPLTL).

It belongs to the complex I subunit 2 family. In terms of assembly, core subunit of respiratory chain NADH dehydrogenase (Complex I) which is composed of 45 different subunits.

The protein resides in the mitochondrion inner membrane. It carries out the reaction a ubiquinone + NADH + 5 H(+)(in) = a ubiquinol + NAD(+) + 4 H(+)(out). Core subunit of the mitochondrial membrane respiratory chain NADH dehydrogenase (Complex I) which catalyzes electron transfer from NADH through the respiratory chain, using ubiquinone as an electron acceptor. Essential for the catalytic activity and assembly of complex I. This chain is NADH-ubiquinone oxidoreductase chain 2 (mt-nd2), found in Xenopus laevis (African clawed frog).